The chain runs to 276 residues: Octanoyltransferase LipM (276 aa).

Residues 31-246 (GLIPPVIRFY…GFAKSLQIEL (216 aa)) enclose the BPL/LPL catalytic domain. The active-site Acyl-thioester intermediate is cysteine 148.

This sequence belongs to the octanoyltransferase LipM family. In terms of assembly, monomer.

The enzyme catalyses octanoyl-[ACP] + L-lysyl-[protein] = N(6)-octanoyl-L-lysyl-[protein] + holo-[ACP] + H(+). The protein operates within protein modification; protein lipoylation via endogenous pathway; protein N(6)-(lipoyl)lysine from octanoyl-[acyl-carrier-protein]. Its function is as follows. Catalyzes the transfer of endogenously produced octanoic acid from octanoyl-acyl-carrier-protein onto the lipoyl domain of GcvH, an intermediate carrier during protein lipoylation. This is Octanoyltransferase LipM from Lysinibacillus sphaericus (strain C3-41).